The primary structure comprises 1257 residues: Phosphatidylinositol 3,4,5-trisphosphate 5-phosphatase 2 (1257 aa).

The SH2 domain maps to 21 to 117 (WYHRDLSRAA…GLVCALLLPV (97 aa)). Positions 119-132 (GEREPDPPDDRDAS) are enriched in basic and acidic residues. The interval 119-181 (GEREPDPPDD…ESTPNGLSTV (63 aa)) is disordered. S132 carries the post-translational modification Phosphoserine. Over residues 156 to 166 (PSSPLPTPETP) the composition is skewed to pro residues. At T165 the chain carries Phosphothreonine. Residues S241 and S353 each carry the phosphoserine modification. Y887 bears the Phosphotyrosine mark. The residue at position 891 (S891) is a Phosphoserine. The segment at 897 to 986 (TGAKSKVPSV…PPKNSFNNPA (90 aa)) is disordered. The span at 939-951 (PPPTGRPPAPPRA) shows a compositional bias: pro residues. The SH3-binding motif lies at 945–950 (PPAPPR). A compositionally biased stretch (basic and acidic residues) spans 952-966 (VPREEPLNPRLKSEG). Residues 984–987 (NPAY) carry the NPXY motif motif. The residue at position 987 (Y987) is a Phosphotyrosine. Positions 999–1008 (PLEPPSLARA) are enriched in low complexity. The disordered stretch occupies residues 999–1119 (PLEPPSLARA…FLGEVASGDD (121 aa)). 2 stretches are compositionally biased toward pro residues: residues 1049–1060 (LPPPDFPPPPLP) and 1088–1104 (GPPP…PPGT). Position 1132 is a phosphoserine (S1132). Residues 1134 to 1196 (VDYAPGPGRS…PQGGRASGLG (63 aa)) are disordered. 2 positions are modified to phosphotyrosine: Y1136 and Y1161. In terms of domain architecture, SAM spans 1195–1257 (LGEAGMGAWL…LLLDTLQLSK (63 aa)). S1256 is subject to Phosphoserine.

It belongs to the inositol 1,4,5-trisphosphate 5-phosphatase family. In terms of assembly, interacts with tyrosine phosphorylated form of SHC1. Interacts with EGFR. Upon stimulation by the EGF signaling pathway, it forms a complex with SHC1 and EGFR. Interacts with cytoskeletal protein SORBS3/vinexin, promoting its localization to the periphery of cells. Forms a complex with filamin (FLNA or FLNB), actin, GPIb (GP1BA or GP1BB) that regulates cortical and submembraneous actin. Interacts with c-Met/MET, when c-Met/MET is phosphorylated on 'Tyr-1356'. Interacts with p130Cas/BCAR1. Interacts with CENTD3/ARAP3 via its SAM domain. Interacts with c-Cbl/CBL and CAP/SORBS1. Interacts with activated EPHA2 receptor. Interacts with receptors FCGR2A. Interacts with FCGR2B. Interacts with tyrosine kinase ABL1. Interacts with tyrosine kinase TEC. Interacts with CSF1R. Interacts (via N-terminus) with SH3YL1 (via SH3 domain). Interacts (via SH2 domain) with tyrosine phosphorylated KLRC1 (via ITIM). Interacts with NEDD9/HEF1. In terms of processing, tyrosine phosphorylated by the members of the SRC family after exposure to a diverse array of extracellular stimuli such as insulin, growth factors such as EGF or PDGF, chemokines, integrin ligands and hypertonic and oxidative stress. May be phosphorylated upon IgG receptor FCGR2B-binding. Phosphorylated at Tyr-987 following cell attachment and spreading. Phosphorylated at Tyr-1161 following EGF signaling pathway stimulation. As to expression, widely expressed.

It localises to the cytoplasm. It is found in the cytosol. The protein localises to the cytoskeleton. The protein resides in the membrane. Its subcellular location is the cell projection. It localises to the filopodium. It is found in the lamellipodium. The protein localises to the basal cell membrane. The protein resides in the nucleus. Its subcellular location is the nucleus speckle. It localises to the spindle pole. It carries out the reaction a 1,2-diacyl-sn-glycero-3-phospho-(1D-myo-inositol-3,4,5-trisphosphate) + H2O = a 1,2-diacyl-sn-glycero-3-phospho-(1D-myo-inositol-3,4-bisphosphate) + phosphate. The enzyme catalyses 1,2-dioctanoyl-sn-glycero-3-phospho-(1D-myo-inositol-3,4,5-trisphosphate) + H2O = 1,2-dioctanoyl-sn-glycero-3-phospho-(1D-myo-inositol-3,4-bisphosphate) + phosphate. It catalyses the reaction 1,2-dihexadecanoyl-sn-glycero-3-phospho-(1D-myo-inositol-3,4,5-trisphosphate) + H2O = 1,2-dihexadecanoyl-sn-glycero-3-phospho-(1D-myo-inositol-3,4-bisphosphate) + phosphate. Its activity is regulated as follows. Activated upon translocation to the sites of synthesis of PtdIns(3,4,5)P3 in the membrane. Enzymatic activity is enhanced in the presence of phosphatidylserine. Its function is as follows. Phosphatidylinositol (PtdIns) phosphatase that specifically hydrolyzes the 5-phosphate of phosphatidylinositol-3,4,5-trisphosphate (PtdIns(3,4,5)P3) to produce PtdIns(3,4)P2, thereby negatively regulating the PI3K (phosphoinositide 3-kinase) pathways. Required for correct mitotic spindle orientation and therefore progression of mitosis. Plays a central role in regulation of PI3K-dependent insulin signaling, although the precise molecular mechanisms and signaling pathways remain unclear. While overexpression reduces both insulin-stimulated MAP kinase and Akt activation, its absence does not affect insulin signaling or GLUT4 trafficking. Confers resistance to dietary obesity. May act by regulating AKT2, but not AKT1, phosphorylation at the plasma membrane. Part of a signaling pathway that regulates actin cytoskeleton remodeling. Required for the maintenance and dynamic remodeling of actin structures as well as in endocytosis, having a major impact on ligand-induced EGFR internalization and degradation. Participates in regulation of cortical and submembraneous actin by hydrolyzing PtdIns(3,4,5)P3 thereby regulating membrane ruffling. Regulates cell adhesion and cell spreading. Required for HGF-mediated lamellipodium formation, cell scattering and spreading. Acts as a negative regulator of EPHA2 receptor endocytosis by inhibiting via PI3K-dependent Rac1 activation. Acts as a regulator of neuritogenesis by regulating PtdIns(3,4,5)P3 level and is required to form an initial protrusive pattern, and later, maintain proper neurite outgrowth. Acts as a negative regulator of the FC-gamma-RIIA receptor (FCGR2A). Mediates signaling from the FC-gamma-RIIB receptor (FCGR2B), playing a central role in terminating signal transduction from activating immune/hematopoietic cell receptor systems. Upon stimulation by EGF, it is recruited by EGFR and dephosphorylates PtdIns(3,4,5)P3. Plays a negative role in regulating the PI3K-PKB pathway, possibly by inhibiting PKB activity. Down-regulates Fc-gamma-R-mediated phagocytosis in macrophages independently of INPP5D/SHIP1. In macrophages, down-regulates NF-kappa-B-dependent gene transcription by regulating macrophage colony-stimulating factor (M-CSF)-induced signaling. Plays a role in the localization of AURKA and NEDD9/HEF1 to the basolateral membrane at interphase in polarized cysts, thereby mediates cell cycle homeostasis, cell polarization and cilia assembly. Additionally promotion of cilia growth is also facilitated by hydrolysis of (PtdIns(3,4,5)P3) to PtdIns(3,4)P2. Promotes formation of apical membrane-initiation sites during the initial stages of lumen formation via Rho family-induced actin filament organization and CTNNB1 localization to cell-cell contacts. May also hydrolyze PtdIns(1,3,4,5)P4, and could thus affect the levels of the higher inositol polyphosphates like InsP6. Involved in endochondral ossification. The chain is Phosphatidylinositol 3,4,5-trisphosphate 5-phosphatase 2 from Mus musculus (Mouse).